Here is a 136-residue protein sequence, read N- to C-terminus: Large ribosomal subunit protein uL16c (136 aa).

The protein belongs to the universal ribosomal protein uL16 family. As to quaternary structure, part of the 50S ribosomal subunit.

The protein localises to the plastid. It is found in the chloroplast. This Phaseolus angularis (Azuki bean) protein is Large ribosomal subunit protein uL16c.